The primary structure comprises 414 residues: Eukaryotic initiation factor 4A-3 (414 aa).

The Q motif motif lies at 41 to 69; sequence ESFDDMGLQENLLRGIYAYGFEKPSAIQQ. Residues 72–242 enclose the Helicase ATP-binding domain; sequence IVPFCKGLDV…RKFMNKPVRI (171 aa). 85–92 contacts ATP; sequence AQSGTGKT. Residues 190–193 carry the DEAD box motif; the sequence is DEAD. Residues 253 to 414 form the Helicase C-terminal domain; it reads GIKQFYVNVE…ELPANVADLL (162 aa).

This sequence belongs to the DEAD box helicase family. eIF4A subfamily. As to quaternary structure, eIF4F is a multi-subunit complex, the composition of which varies with external and internal environmental conditions. It is composed of at least EIF4A, EIF4E and EIF4G. Interacts with DRM2 (via UBA domains).

It localises to the cytoplasm. The protein resides in the nucleus. The enzyme catalyses ATP + H2O = ADP + phosphate + H(+). Functionally, ATP-dependent RNA helicase which is a subunit of the eIF4F complex involved in cap recognition and is required for mRNA binding to ribosome. In the current model of translation initiation, eIF4A unwinds RNA secondary structures in the 5'-UTR of mRNAs which is necessary to allow efficient binding of the small ribosomal subunit, and subsequent scanning for the initiator codon. This chain is Eukaryotic initiation factor 4A-3, found in Oryza sativa subsp. japonica (Rice).